The primary structure comprises 650 residues: MGKIIGIDLGTTNSCVAIMEGNQVKVIENSEGARTTPSIIAYMDDNEVLVGAPAKRQSVTNPKNTLFAVKRLIGRRFEEKEVQKDIGLMPYAIIKADNGDAWVEAHGEKLAPPQVSAEVLRKMKKTAEDYLGEPVTEAVITVPAYFNDSQRQATKDAGRIAGLEVKRIINEPTAAALAFGLDKAEKGDRKIAVYDLGGGTFDVSIIEIADVDGEMQFEVLSTNGDTFLGGEDFDQRIIDYIIGEFKKEQGVDLSKDVLALQRLKEAAEKAKIELSSSQQTEINLPYITADASGPKHLNLKVTRAKLEALVEDLVERTIEPCRTAIKDAGVKVSDIDDVILVGGQTRMPKVQEKVKEFFGKEPRRDVNPDEAVAVGAAIQGQVLSGDRKDVLLLDVTPLSLGIETLGGVMTKMINKNTTIPTKHAQVYSTADDNQGAVTIKVFQGEREMAAGNKLLGEFNLEGIPPAPRGVPQIEVTFDIDANGILHVGAKDKATGKENKITIKANSGLSEAEIEKMVKDAEANAAEDHKLRELAESRNQGDALVHSTKKALTEYGDKLEAGEKEKIEAALKELEDVLKNASSDKAAIDAKVEAVATASQKLGEKMYADMQAQQAGAAGAAGAAAEGASAQGGAQPPDDVVDADFKEVKKD.

Threonine 200 carries the post-translational modification Phosphothreonine; by autocatalysis. Positions 611-634 (AQQAGAAGAAGAAAEGASAQGGAQ) are enriched in low complexity. A disordered region spans residues 611 to 650 (AQQAGAAGAAGAAAEGASAQGGAQPPDDVVDADFKEVKKD).

The protein belongs to the heat shock protein 70 family.

Its function is as follows. Acts as a chaperone. This chain is Chaperone protein DnaK, found in Burkholderia pseudomallei (strain 1710b).